A 394-amino-acid polypeptide reads, in one-letter code: Putative gustatory receptor 22a (394 aa).

The Cytoplasmic portion of the chain corresponds to 1–16 (MSQPKRIHRICKGLAR). The chain crosses the membrane as a helical span at residues 17–37 (FTIRATLYGSWVLGLFPFTFD). Topologically, residues 38–47 (SRKRRLNRSK) are extracellular. N44 carries an N-linked (GlcNAc...) asparagine glycan. Residues 48–68 (WLLAYGLVLNLTLLVLSMLPS) form a helical membrane-spanning segment. The Cytoplasmic segment spans residues 69 to 148 (TDDHNSVKVE…HTFNRYVIEK (80 aa)). The chain crosses the membrane as a helical span at residues 149–169 (GLVIILEIGSSLVLYFGIPNS). A topological domain (extracellular) is located at residue K170. Residues 171 to 191 (IVVYEAVCIYIVQLEVLMVVM) traverse the membrane as a helical segment. The Cytoplasmic portion of the chain corresponds to 192-256 (HFHLAVIYIY…TAIYDIQVTL (65 aa)). The helical transmembrane segment at 257-277 (FMATLFSVNIIVGHVLVICWI) threads the bilayer. N-linked (GlcNAc...) asparagine glycosylation occurs at N278. Residues 278-281 (NITR) are Extracellular-facing. A helical transmembrane segment spans residues 282–302 (FSLLVIFLLFPQALIINFWDL). Topologically, residues 303-361 (WQGIAFCDLAESTGKKTSMILKLFNDMENMDQETERRVTEFTLFCSHRRLKVCHLGLLD) are cytoplasmic. The helical transmembrane segment at 362 to 382 (INYEMGFRMIITNILYVVFLV) threads the bilayer. At 383–394 (QFDYMNLKFKTD) the chain is on the extracellular side.

This sequence belongs to the insect chemoreceptor superfamily. Gustatory receptor (GR) family. Gr22e subfamily. As to expression, expressed in neurons of the terminal external chemosensory organ of larvae.

Its subcellular location is the cell membrane. Probable gustatory receptor which mediates acceptance or avoidance behavior, depending on its substrates. In Drosophila melanogaster (Fruit fly), this protein is Putative gustatory receptor 22a (Gr22a).